The following is a 294-amino-acid chain: Nucleotide-binding protein Tfu_2020 (294 aa).

18–25 (GMSGAGRS) serves as a coordination point for ATP. 69–72 (DVRS) serves as a coordination point for GTP.

It belongs to the RapZ-like family.

Displays ATPase and GTPase activities. This chain is Nucleotide-binding protein Tfu_2020, found in Thermobifida fusca (strain YX).